Reading from the N-terminus, the 285-residue chain is Ribosomal protein L11 methyltransferase (285 aa).

Thr-131, Gly-154, Asp-176, and Asn-223 together coordinate S-adenosyl-L-methionine.

This sequence belongs to the methyltransferase superfamily. PrmA family.

The protein localises to the cytoplasm. The enzyme catalyses L-lysyl-[protein] + 3 S-adenosyl-L-methionine = N(6),N(6),N(6)-trimethyl-L-lysyl-[protein] + 3 S-adenosyl-L-homocysteine + 3 H(+). In terms of biological role, methylates ribosomal protein L11. The polypeptide is Ribosomal protein L11 methyltransferase (Brucella suis (strain ATCC 23445 / NCTC 10510)).